A 312-amino-acid chain; its full sequence is MNWTELSIIINHEAVELATNILENHGSNGVVIEDSYDLINQPEDKYGEIYALKKEDYPDKGVRLKAYFNELTYDDKLRQRIKDELLNLDELDQHNVQFSEQIIAETDWENEWKNYFHPFRASKKFTIVPSWETYAKEADEELCIELDPGMAFGTGDHPTTSMCLKAIETYVLPQHSVIDVGTGSGILSIASYLIGVKRIKALDIDEMAVSVAKENFRRNHCETLIEAVPGNLLKDETEKFDIVIANILAHIIDEMIDDAYNTLNEGGYFITSGIIKEKYEGIQSHMERVGFKIISEQHDNGWVCLVGQKVSE.

Residues T160, G181, D203, and N246 each contribute to the S-adenosyl-L-methionine site.

It belongs to the methyltransferase superfamily. PrmA family.

It localises to the cytoplasm. The catalysed reaction is L-lysyl-[protein] + 3 S-adenosyl-L-methionine = N(6),N(6),N(6)-trimethyl-L-lysyl-[protein] + 3 S-adenosyl-L-homocysteine + 3 H(+). Its function is as follows. Methylates ribosomal protein L11. The protein is Ribosomal protein L11 methyltransferase of Staphylococcus aureus (strain MRSA252).